Here is a 366-residue protein sequence, read N- to C-terminus: Nitronate monooxygenase (366 aa).

FMN contacts are provided by residues asparagine 74, glutamine 181, glycine 186, glycine 223, and 242-245 (QLGT).

It belongs to the nitronate monooxygenase family. NMO class I subfamily. FMN is required as a cofactor.

It carries out the reaction 3 propionate 3-nitronate + 3 O2 + H2O = 3 3-oxopropanoate + 2 nitrate + nitrite + H2O2 + 3 H(+). Nitronate monooxygenase that uses molecular oxygen to catalyze the oxidative denitrification of alkyl nitronates. Acts on propionate 3-nitronate (P3N), the presumed physiological substrate. Is likely involved in the degradation of P3N, that allows B.phytofirmans PsJN to grow on 3-nitropropionate/P3N as the sole source of nitrogen and carbon. Also probably functions in the detoxification of P3N, a metabolic poison produced by plants and fungi as a defense mechanism. Cannot oxidize nitroalkanes such as 3-nitropropionate, nitroethane, or 1-nitropropane. The protein is Nitronate monooxygenase of Paraburkholderia phytofirmans (strain DSM 17436 / LMG 22146 / PsJN) (Burkholderia phytofirmans).